Reading from the N-terminus, the 161-residue chain is UPF0178 protein BruAb1_1955 (161 aa).

It belongs to the UPF0178 family.

This is UPF0178 protein BruAb1_1955 from Brucella abortus biovar 1 (strain 9-941).